Reading from the N-terminus, the 221-residue chain is ATP-dependent Clp protease proteolytic subunit 3 (221 aa).

The Nucleophile role is filled by Ser-118. His-143 is a catalytic residue.

It belongs to the peptidase S14 family. Fourteen ClpP subunits assemble into 2 heptameric rings which stack back to back to give a disk-like structure with a central cavity, resembling the structure of eukaryotic proteasomes.

It localises to the cytoplasm. The enzyme catalyses Hydrolysis of proteins to small peptides in the presence of ATP and magnesium. alpha-casein is the usual test substrate. In the absence of ATP, only oligopeptides shorter than five residues are hydrolyzed (such as succinyl-Leu-Tyr-|-NHMec, and Leu-Tyr-Leu-|-Tyr-Trp, in which cleavage of the -Tyr-|-Leu- and -Tyr-|-Trp bonds also occurs).. Its function is as follows. Cleaves peptides in various proteins in a process that requires ATP hydrolysis. Has a chymotrypsin-like activity. Plays a major role in the degradation of misfolded proteins. The polypeptide is ATP-dependent Clp protease proteolytic subunit 3 (Nocardia farcinica (strain IFM 10152)).